Here is a 321-residue protein sequence, read N- to C-terminus: Glucokinase (321 aa).

8 to 13 (GDVGGT) provides a ligand contact to ATP.

This sequence belongs to the bacterial glucokinase family.

It localises to the cytoplasm. The catalysed reaction is D-glucose + ATP = D-glucose 6-phosphate + ADP + H(+). This Salmonella arizonae (strain ATCC BAA-731 / CDC346-86 / RSK2980) protein is Glucokinase.